The chain runs to 219 residues: Cytidylate kinase (219 aa).

15-23 (GPAASGKGT) serves as a coordination point for ATP.

It belongs to the cytidylate kinase family. Type 1 subfamily.

The protein resides in the cytoplasm. It catalyses the reaction CMP + ATP = CDP + ADP. It carries out the reaction dCMP + ATP = dCDP + ADP. In Brucella abortus (strain S19), this protein is Cytidylate kinase.